The chain runs to 104 residues: Met repressor (104 aa).

Belongs to the MetJ family. In terms of assembly, homodimer.

It localises to the cytoplasm. Functionally, this regulatory protein, when combined with SAM (S-adenosylmethionine) represses the expression of the methionine regulon and of enzymes involved in SAM synthesis. This is Met repressor from Shewanella oneidensis (strain ATCC 700550 / JCM 31522 / CIP 106686 / LMG 19005 / NCIMB 14063 / MR-1).